A 477-amino-acid chain; its full sequence is Glycogen synthase 1 (477 aa).

Lys-15 serves as a coordination point for ADP-alpha-D-glucose.

Belongs to the glycosyltransferase 1 family. Bacterial/plant glycogen synthase subfamily.

It catalyses the reaction [(1-&gt;4)-alpha-D-glucosyl](n) + ADP-alpha-D-glucose = [(1-&gt;4)-alpha-D-glucosyl](n+1) + ADP + H(+). It participates in glycan biosynthesis; glycogen biosynthesis. Synthesizes alpha-1,4-glucan chains using ADP-glucose. In Synechocystis sp. (strain ATCC 27184 / PCC 6803 / Kazusa), this protein is Glycogen synthase 1 (glgA1).